Here is a 145-residue protein sequence, read N- to C-terminus: Deoxyuridine 5'-triphosphate nucleotidohydrolase (145 aa).

Substrate is bound by residues 63–65 (RSG), N76, and 80–82 (TID).

The protein belongs to the dUTPase family. The cofactor is Mg(2+).

The catalysed reaction is dUTP + H2O = dUMP + diphosphate + H(+). It functions in the pathway pyrimidine metabolism; dUMP biosynthesis; dUMP from dCTP (dUTP route): step 2/2. Its function is as follows. This enzyme is involved in nucleotide metabolism: it produces dUMP, the immediate precursor of thymidine nucleotides and it decreases the intracellular concentration of dUTP so that uracil cannot be incorporated into DNA. This Chlamydia pneumoniae (Chlamydophila pneumoniae) protein is Deoxyuridine 5'-triphosphate nucleotidohydrolase.